We begin with the raw amino-acid sequence, 551 residues long: Calnexin homolog (551 aa).

The N-terminal stretch at 1 to 26 (MVDRKEIPLAMGLLAVLLFFVASSSS) is a signal peptide. Residues 27-480 (FHLVRASDEV…EKGEKQPNLT (454 aa)) are Lumenal-facing. The Ca(2+) site is built by S44 and D75. C118 and C153 form a disulfide bridge. Positions 122 and 124 each coordinate an alpha-D-glucoside. Residue N140 is glycosylated (N-linked (GlcNAc...) asparagine). An alpha-D-glucoside is bound by residues Y144 and D151. The segment at 226–330 (ALIPSKTIPD…CGEWKRPTKS (105 aa)) is disordered. The tract at residues 233–364 (IPDPDDKKPE…QEIPNPEYFE (132 aa)) is p domain (Extended arm). 2 stretches are compositionally biased toward basic and acidic residues: residues 234 to 269 (PDPDDKKPEDWDERAKIPDPEAVKPEDWDEDAPREI) and 276 to 295 (KPEPWLDHEPEVDDPEAKPE). 5 consecutive repeat copies span residues 235-246 (DPDDKKPEDWDE), 252-263 (DPEAVKPEDWDE), 271-282 (DEEAEKPEPWLD), 289-299 (DPEAKPEDWDD), and 303-313 (GEWEAPKIENP). 2 4 X approximate repeats regions span residues 235–299 (DPDD…DWDD) and 303–360 (GEWE…IPNP). The segment covering 296-305 (DWDDEEDGEW) has biased composition (acidic residues). Cysteines 315 and 321 form a disulfide. A run of 3 repeats spans residues 322-332 (GEWKRPTKSNP), 336-346 (GKWSAPYIDNP), and 350-360 (GIWKPQEIPNP). An alpha-D-glucoside is bound at residue E379. D390 provides a ligand contact to Ca(2+). An N-linked (GlcNAc...) asparagine glycan is attached at N478. A helical transmembrane segment spans residues 481-501 (IGIIVSVVIVFVSIFFRLIFG). Topologically, residues 502 to 551 (GKKPANVEANVEKKKTNTETTSKQDGGEKEDNKEKEETANPPRRRPKRDN) are cytoplasmic. The disordered stretch occupies residues 510-551 (ANVEKKKTNTETTSKQDGGEKEDNKEKEETANPPRRRPKRDN). Residues 526–539 (DGGEKEDNKEKEET) are compositionally biased toward basic and acidic residues.

This sequence belongs to the calreticulin family. As to expression, in vegetative and flowering tissues.

Its subcellular location is the endoplasmic reticulum membrane. Functionally, calcium-binding protein that interacts with newly synthesized monoglucosylated glycoproteins in the endoplasmic reticulum. It may act in assisting protein assembly and/or in the retention within the ER of unassembled protein subunits. It seems to play a major role in the quality control apparatus of the ER by the retention of incorrectly folded proteins. The sequence is that of Calnexin homolog from Pisum sativum (Garden pea).